A 488-amino-acid polypeptide reads, in one-letter code: Replication-associated protein (488 aa).

The disordered stretch occupies residues 462-488 (PRPRQMQRSATEHNLFQYARSGRDPTS).

It localises to the host nucleus. Its function is as follows. Plays an essential for the replication of viral DNA. Presumably cleaves viral genomic dsRNA replicative form to initiate rolling circle replication. This Chaetoceros diatodnavirus 1 (Chaetoceros setoense DNA virus) protein is Replication-associated protein.